The chain runs to 553 residues: ATP synthase F(1) complex subunit alpha, mitochondrial (553 aa).

A mitochondrion-targeting transit peptide spans Met1 to Leu43. 2 positions are modified to phosphoserine: Ser53 and Ser65. Ser76 carries the phosphoserine; alternate modification. The O-linked (GlcNAc) serine; alternate glycan is linked to Ser76. Ser106 is modified (phosphoserine). Lys123, Lys126, and Lys132 each carry N6-acetyllysine. Residue Thr134 is modified to Phosphothreonine. Residue Lys161 is modified to N6-acetyllysine; alternate. Position 161 is an N6-succinyllysine; alternate (Lys161). Phosphoserine is present on Ser166. At Lys167 the chain carries N6-acetyllysine; alternate. Residue Lys167 is modified to N6-succinyllysine; alternate. Phosphoserine is present on Ser184. Arg204 carries the post-translational modification Omega-N-methylarginine. The ATP site is built by Gln215, Gly217, Lys218, Thr219, and Ser220. Position 219 (Thr219) interacts with Mg(2+). 2 positions are modified to N6-acetyllysine; alternate: Lys230 and Lys239. An N6-succinyllysine; alternate mark is found at Lys230 and Lys239. Lys240 carries the N6-acetyllysine modification. Lys261 and Lys305 each carry N6-acetyllysine; alternate. Lys261 and Lys305 each carry N6-succinyllysine; alternate. Asp312 is a binding site for Mg(2+). Lys427 is modified (N6-acetyllysine; alternate). Residue Lys427 is modified to N6-succinyllysine; alternate. Lys434 carries the N6-acetyllysine modification. Positions 473 and 475 each coordinate ATP. N6-acetyllysine; alternate is present on residues Lys498, Lys506, Lys531, and Lys539. N6-succinyllysine; alternate occurs at positions 498, 506, 531, and 539. N6-acetyllysine is present on Lys541.

It belongs to the ATPase alpha/beta chains family. Homotrimer. Component of the ATP synthase complex composed at least of ATP5F1A/subunit alpha, ATP5F1B/subunit beta, ATP5MC1/subunit c (homooctomer), MT-ATP6/subunit a, MT-ATP8/subunit 8, ATP5ME/subunit e, ATP5MF/subunit f, ATP5MG/subunit g, ATP5MK/subunit k, ATP5MJ/subunit j, ATP5F1C/subunit gamma, ATP5F1D/subunit delta, ATP5F1E/subunit epsilon, ATP5PF/subunit F6, ATP5PB/subunit b, ATP5PD/subunit d, ATP5PO/subunit OSCP. ATP synthase complex consists of a soluble F(1) head domain (subunits alpha(3) and beta(3)) - the catalytic core - and a membrane F(0) domain - the membrane proton channel (subunits c, a, 8, e, f, g, k and j). These two domains are linked by a central stalk (subunits gamma, delta, and epsilon) rotating inside the F1 region and a stationary peripheral stalk (subunits F6, b, d, and OSCP). Interacts with ATPAF2. Interacts with HRG; the interaction occurs on the surface of T-cells and alters the cell morphology when associated with concanavalin (in vitro). Interacts with PLG (angiostatin peptide); the interaction inhibits most of the angiogenic properties of angiostatin. Interacts with BLOC1S1. Interacts with BCL2L1 isoform BCL-X(L); the interaction mediates the association of BCL2L1 isoform BCL-X(L) with the mitochondrial membrane F(1)F(0) ATP synthase and enhances neurons metabolic efficiency. Interacts with CLN5 and PPT1. Interacts with S100A1; this interaction increases F1-ATPase activity. Interacts with ABCB7; this interaction allows the regulation of cellular iron homeostasis and cellular reactive oxygen species (ROS) levels in cardiomyocytes. Post-translationally, acetylated on lysine residues. BLOC1S1 is required for acetylation. As to expression, expressed in heart (at protein level).

It localises to the mitochondrion. It is found in the mitochondrion inner membrane. The protein resides in the cell membrane. In terms of biological role, subunit alpha, of the mitochondrial membrane ATP synthase complex (F(1)F(0) ATP synthase or Complex V) that produces ATP from ADP in the presence of a proton gradient across the membrane which is generated by electron transport complexes of the respiratory chain. ATP synthase complex consist of a soluble F(1) head domain - the catalytic core - and a membrane F(1) domain - the membrane proton channel. These two domains are linked by a central stalk rotating inside the F(1) region and a stationary peripheral stalk. During catalysis, ATP synthesis in the catalytic domain of F(1) is coupled via a rotary mechanism of the central stalk subunits to proton translocation. In vivo, can only synthesize ATP although its ATP hydrolase activity can be activated artificially in vitro. With the catalytic subunit beta (ATP5F1B), forms the catalytic core in the F(1) domain. Subunit alpha does not bear the catalytic high-affinity ATP-binding sites. The protein is ATP synthase F(1) complex subunit alpha, mitochondrial of Sus scrofa (Pig).